The sequence spans 511 residues: Maturase K (511 aa).

The protein belongs to the intron maturase 2 family. MatK subfamily.

It is found in the plastid. The protein localises to the chloroplast. In terms of biological role, usually encoded in the trnK tRNA gene intron. Probably assists in splicing its own and other chloroplast group II introns. This Brachypodium distachyon (Purple false brome) protein is Maturase K.